The sequence spans 380 residues: 5-amino-6-(D-ribitylamino)uracil--L-tyrosine 4-hydroxyphenyl transferase (380 aa).

The region spanning 56–303 (VTYIINRNIN…GAVARIYLGN (248 aa)) is the Radical SAM core domain. Cys-70, Cys-74, and Cys-77 together coordinate [4Fe-4S] cluster.

The protein belongs to the radical SAM superfamily. CofH family. As to quaternary structure, consists of two subunits, CofG and CofH. The cofactor is [4Fe-4S] cluster.

It catalyses the reaction 5-amino-6-(D-ribitylamino)uracil + L-tyrosine + S-adenosyl-L-methionine = 5-amino-5-(4-hydroxybenzyl)-6-(D-ribitylimino)-5,6-dihydrouracil + 2-iminoacetate + 5'-deoxyadenosine + L-methionine + H(+). It functions in the pathway cofactor biosynthesis; coenzyme F0 biosynthesis. In terms of biological role, catalyzes the radical-mediated synthesis of 5-amino-5-(4-hydroxybenzyl)-6-(D-ribitylimino)-5,6-dihydrouracil from 5-amino-6-(D-ribitylamino)uracil and L-tyrosine. The polypeptide is 5-amino-6-(D-ribitylamino)uracil--L-tyrosine 4-hydroxyphenyl transferase (Nostoc punctiforme (strain ATCC 29133 / PCC 73102)).